The chain runs to 219 residues: Probable nicotinate-nucleotide adenylyltransferase (219 aa).

The protein belongs to the NadD family.

It catalyses the reaction nicotinate beta-D-ribonucleotide + ATP + H(+) = deamido-NAD(+) + diphosphate. It functions in the pathway cofactor biosynthesis; NAD(+) biosynthesis; deamido-NAD(+) from nicotinate D-ribonucleotide: step 1/1. In terms of biological role, catalyzes the reversible adenylation of nicotinate mononucleotide (NaMN) to nicotinic acid adenine dinucleotide (NaAD). This Enterococcus faecalis (strain ATCC 700802 / V583) protein is Probable nicotinate-nucleotide adenylyltransferase.